A 431-amino-acid chain; its full sequence is Serine hydroxymethyltransferase (431 aa).

(6S)-5,6,7,8-tetrahydrofolate-binding positions include leucine 126 and 130-132 (GHL). Residue lysine 235 is modified to N6-(pyridoxal phosphate)lysine.

It belongs to the SHMT family. As to quaternary structure, homodimer. Requires pyridoxal 5'-phosphate as cofactor.

The protein localises to the cytoplasm. It catalyses the reaction (6R)-5,10-methylene-5,6,7,8-tetrahydrofolate + glycine + H2O = (6S)-5,6,7,8-tetrahydrofolate + L-serine. It participates in one-carbon metabolism; tetrahydrofolate interconversion. The protein operates within amino-acid biosynthesis; glycine biosynthesis; glycine from L-serine: step 1/1. In terms of biological role, catalyzes the reversible interconversion of serine and glycine with tetrahydrofolate (THF) serving as the one-carbon carrier. This reaction serves as the major source of one-carbon groups required for the biosynthesis of purines, thymidylate, methionine, and other important biomolecules. Also exhibits THF-independent aldolase activity toward beta-hydroxyamino acids, producing glycine and aldehydes, via a retro-aldol mechanism. In Nocardia farcinica (strain IFM 10152), this protein is Serine hydroxymethyltransferase.